Consider the following 4249-residue polypeptide: Fibrocystin-L (4249 aa).

An N-terminal signal peptide occupies residues 1-20 (MGHLWLSGTWFLFGLLWCAA). At 21–4222 (DSHKGSSETI…TPVQTLAVIT (4202 aa)) the chain is on the extracellular side. 14 IPT/TIG domains span residues 31–132 (PKVT…GVAS), 146–255 (PTIR…KMTY), 270–361 (PEVV…ILEY), 1067–1153 (PLIL…HFIY), 1155–1234 (SQIS…SFSY), 1240–1323 (PVVT…KLNA), 1329–1468 (LEVI…SFSY), 1565–1648 (PSII…TLTK), 1658–1742 (PNID…SFSY), 1748–1827 (PYVT…NLTI), 1830–1909 (PAVA…SFTY), 1915–1996 (PFLK…AFEY), 1998–2084 (LSIQ…LFTY), and 2090–2175 (PLIT…DFLY). Residues 337-492 (PGGRGLKVEV…NVFTEQQTGD (156 aa)) form the PA14 domain. O-linked (GalNAc...) threonine glycosylation is found at threonine 1297 and threonine 1359. An O-linked (GalNAc...) threonine glycan is attached at threonine 1838. The G8 1 domain occupies 2183–2303 (SSWGGSPPPE…IPVVWTRLTH (121 aa)). PbH1 repeat units follow at residues 2484 to 2506 (QFKSYVKGCAIHQSYNRAITIHN), 2507 to 2529 (THHLLVERNIIYDIKGGAFFIED), 2565 to 2587 (NPNNTIRHNAAAGGTHFGFWYRM), 2664 to 2686 (GGALQFHNFVMVNNNEAGIETKR), and 2732 to 2755 (SQGLTVSSVHFMNFDRHACVALGV). Residues 3035-3173 (SFWQSSPENN…HSVYKTKLLE (139 aa)) form the G8 2 domain. 5 PbH1 repeats span residues 3292-3314 (KGNARISNVEFHHSGQEGYRDST), 3354-3376 (TDGVDIDDNIIYFTVGEGIRIWG), 3415-3437 (GTNTVLQNNVVAGFGRVGYRIDG), 3470-3492 (PGCSLIQGFTIWTCWDYGIYFQT), and 3493-3514 (TESVHIYNVTLVNNGMSIFSMV). Residue threonine 3735 is glycosylated (O-linked (GalNAc...) threonine). The tract at residues 4183–4208 (LSAQSVPGGSGSSPGSGSSSSGHSKA) is disordered. A compositionally biased stretch (low complexity) spans 4197-4208 (GSGSSSSGHSKA). A helical transmembrane segment spans residues 4223-4243 (ACLVGRLLLLEVFMAAVFILN). Over 4244-4249 (TTVGIN) the chain is Cytoplasmic.

As to expression, expressed in neurons in the hippocampus and the cerebral cortex (at protein level). Transiently expressed at high levels in inner ear hair cells, predominantly in outer hair cells, during early postnatal development (at protein level).

Its subcellular location is the membrane. The protein localises to the cell projection. It localises to the stereocilium membrane. Functionally, component of hair-cell stereocilia coat. Required for normal hearing. The sequence is that of Fibrocystin-L (Pkhd1l1) from Mus musculus (Mouse).